Here is a 159-residue protein sequence, read N- to C-terminus: Endoribonuclease YbeY (159 aa).

Positions 117, 121, and 127 each coordinate Zn(2+).

It belongs to the endoribonuclease YbeY family. Zn(2+) is required as a cofactor.

The protein localises to the cytoplasm. In terms of biological role, single strand-specific metallo-endoribonuclease involved in late-stage 70S ribosome quality control and in maturation of the 3' terminus of the 16S rRNA. This Azorhizobium caulinodans (strain ATCC 43989 / DSM 5975 / JCM 20966 / LMG 6465 / NBRC 14845 / NCIMB 13405 / ORS 571) protein is Endoribonuclease YbeY.